A 404-amino-acid chain; its full sequence is tRNA N6-adenosine threonylcarbamoyltransferase, mitochondrial (404 aa).

The N-terminal 27 residues, 1 to 27 (MFQSCLPGALRSWSRGVFSTSTRPRLV), are a transit peptide targeting the mitochondrion. A divalent metal cation-binding residues include histidine 135 and histidine 139. Substrate is bound by residues 157 to 161 (LVSGG), aspartate 190, glycine 210, glutamate 214, 317 to 318 (SN), and threonine 345. Aspartate 346 is a binding site for a divalent metal cation.

The protein belongs to the KAE1 / TsaD family. In terms of assembly, monomer. Requires a divalent metal cation as cofactor.

The protein localises to the mitochondrion. It carries out the reaction L-threonylcarbamoyladenylate + adenosine(37) in tRNA = N(6)-L-threonylcarbamoyladenosine(37) in tRNA + AMP + H(+). Required for the formation of a threonylcarbamoyl group on adenosine at position 37 (t(6)A37) in mitochondrial tRNAs that read codons beginning with adenine. Probably involved in the transfer of the threonylcarbamoyl moiety of threonylcarbamoyl-AMP (TC-AMP) to the N6 group of A37. Involved in mitochondrial genome maintenance. In Danio rerio (Zebrafish), this protein is tRNA N6-adenosine threonylcarbamoyltransferase, mitochondrial.